The following is a 66-amino-acid chain: Beta-toxin Chui4 (66 aa).

In terms of domain architecture, LCN-type CS-alpha/beta spans 1–66 (KEGYLVELGT…VWPLKNKTCK (66 aa)). 4 disulfide bridges follow: Cys-12-Cys-65, Cys-16-Cys-41, Cys-25-Cys-46, and Cys-29-Cys-48.

Belongs to the long (4 C-C) scorpion toxin superfamily. Sodium channel inhibitor family. Beta subfamily. As to expression, expressed by the venom gland.

The protein localises to the secreted. In terms of biological role, beta toxins bind voltage-independently at site-4 of sodium channels (Nav) and shift the voltage of activation toward more negative potentials thereby affecting sodium channel activation and promoting spontaneous and repetitive firing. Acts on human sodium channel Nav1.6/SCN8A. Also able to weakly shift the activation curves of human Nav1.2/SCN2A and Nav1.4/SCN4A. The polypeptide is Beta-toxin Chui4 (Centruroides huichol (Scorpion)).